Reading from the N-terminus, the 324-residue chain is Beta-ketoacyl-[acyl-carrier-protein] synthase III (324 aa).

Active-site residues include Cys112 and His251. Residues 252-256 (QANLR) are ACP-binding. Asn281 is an active-site residue.

It belongs to the thiolase-like superfamily. FabH family. Homodimer.

The protein resides in the cytoplasm. It carries out the reaction malonyl-[ACP] + acetyl-CoA + H(+) = 3-oxobutanoyl-[ACP] + CO2 + CoA. Its pathway is lipid metabolism; fatty acid biosynthesis. Functionally, catalyzes the condensation reaction of fatty acid synthesis by the addition to an acyl acceptor of two carbons from malonyl-ACP. Catalyzes the first condensation reaction which initiates fatty acid synthesis and may therefore play a role in governing the total rate of fatty acid production. Possesses both acetoacetyl-ACP synthase and acetyl transacylase activities. Its substrate specificity determines the biosynthesis of branched-chain and/or straight-chain of fatty acids. The chain is Beta-ketoacyl-[acyl-carrier-protein] synthase III from Clostridium perfringens (strain ATCC 13124 / DSM 756 / JCM 1290 / NCIMB 6125 / NCTC 8237 / Type A).